The sequence spans 490 residues: Probable cytosol aminopeptidase (490 aa).

Mn(2+)-binding residues include Lys-255 and Asp-260. The active site involves Lys-267. Mn(2+) is bound by residues Asp-278, Asp-337, and Glu-339. Arg-341 is a catalytic residue.

The protein belongs to the peptidase M17 family. It depends on Mn(2+) as a cofactor.

The protein localises to the cytoplasm. It carries out the reaction Release of an N-terminal amino acid, Xaa-|-Yaa-, in which Xaa is preferably Leu, but may be other amino acids including Pro although not Arg or Lys, and Yaa may be Pro. Amino acid amides and methyl esters are also readily hydrolyzed, but rates on arylamides are exceedingly low.. The enzyme catalyses Release of an N-terminal amino acid, preferentially leucine, but not glutamic or aspartic acids.. In terms of biological role, presumably involved in the processing and regular turnover of intracellular proteins. Catalyzes the removal of unsubstituted N-terminal amino acids from various peptides. This chain is Probable cytosol aminopeptidase, found in Gluconobacter oxydans (strain 621H) (Gluconobacter suboxydans).